The chain runs to 303 residues: Ribosomal RNA small subunit methyltransferase H (303 aa).

Residues 32 to 34, Asp52, Phe78, Asp99, and Gln106 each bind S-adenosyl-L-methionine; that span reads GGH.

This sequence belongs to the methyltransferase superfamily. RsmH family.

The protein resides in the cytoplasm. It catalyses the reaction cytidine(1402) in 16S rRNA + S-adenosyl-L-methionine = N(4)-methylcytidine(1402) in 16S rRNA + S-adenosyl-L-homocysteine + H(+). Its function is as follows. Specifically methylates the N4 position of cytidine in position 1402 (C1402) of 16S rRNA. This Acinetobacter baylyi (strain ATCC 33305 / BD413 / ADP1) protein is Ribosomal RNA small subunit methyltransferase H.